The chain runs to 136 residues: Urease subunit beta (136 aa).

The segment at Asn113–Ser136 is disordered.

The protein belongs to the urease beta subunit family. In terms of assembly, heterotrimer of UreA (gamma), UreB (beta) and UreC (alpha) subunits. Three heterotrimers associate to form the active enzyme.

It is found in the cytoplasm. It catalyses the reaction urea + 2 H2O + H(+) = hydrogencarbonate + 2 NH4(+). It functions in the pathway nitrogen metabolism; urea degradation; CO(2) and NH(3) from urea (urease route): step 1/1. This Staphylococcus aureus (strain USA300) protein is Urease subunit beta.